The following is a 103-amino-acid chain: Vesicle-associated membrane protein 3 (103 aa).

The segment at 1 to 25 (MSTGVPSGSSAATGSNRRLQQTQNQ) is disordered. Residues 1–81 (MSTGVPSGSS…KRKYWWKNCK (81 aa)) lie on the Cytoplasmic side of the membrane. In terms of domain architecture, v-SNARE coiled-coil homology spans 18–78 (RLQQTQNQVD…AKLKRKYWWK (61 aa)). Residues K70, K72, and K81 each participate in a glycyl lysine isopeptide (Lys-Gly) (interchain with G-Cter in ubiquitin) cross-link. Residues 82–102 (MWAIGISVLVIIVIIIIVWCV) traverse the membrane as a helical; Anchor for type IV membrane protein segment. Position 103 (S103) is a topological domain, vesicular.

This sequence belongs to the synaptobrevin family. Interacts with POPDC1 (via the C-terminus cytoplasmic tail). Interacts with BCAP31; involved in VAMP3 export from the endoplasmic reticulum. Interacts with BAIAP3; this interaction is increased in the presence of calcium. Interacts with PICALM. Post-translationally, ubiquitinated by RNF167 at Lys-70, Lys-72 and Lys-81, regulating the recycling endosome pathway. In terms of processing, (Microbial infection) Targeted and hydrolyzed by C.botulinum neurotoxin type D (BoNT/D, botD) which hydrolyzes the 46-Lys-|-Leu-47 bond and probably inhibits neurotransmitter release. (Microbial infection) Targeted and hydrolyzed by C.botulinum neurotoxin type F (BoNT/F, botF) which hydrolyzes the 45-Gln-|-Lys-46 bond and probably inhibits neurotransmitter release. Post-translationally, (Microbial infection) Targeted and hydrolyzed by C.tetani toxin (tetX) which hydrolyzes the 63-Gln-|-Phe-64 bond and probably inhibits neurotransmitter release. In terms of tissue distribution, ubiquitous.

It localises to the early endosome membrane. The protein resides in the recycling endosome membrane. The protein localises to the synapse. Its subcellular location is the synaptosome. Functionally, SNARE involved in vesicular transport from the late endosomes to the trans-Golgi network. The chain is Vesicle-associated membrane protein 3 (Vamp3) from Rattus norvegicus (Rat).